The following is a 164-amino-acid chain: UPF0304 protein PC1_2778 (164 aa).

It belongs to the UPF0304 family.

This is UPF0304 protein PC1_2778 from Pectobacterium carotovorum subsp. carotovorum (strain PC1).